The chain runs to 445 residues: MREIVHLQAGQCGNQIGAKFWEVISDEHGIDPTGTYHGDSDLQLERINVYYNEATGGKYVPRAVLVDLEPGTMDSVRSGPFGQIFRPDNFVFGQSGAGNNWAKGHYTEGAELVDSVLDVVRKEAESCDCLQGFQLTHSLGGGTGSGMGTLLISKIREEYPDRIMNTFSVVPSPKVSDTVVEPYNATLSVHQLVENTDETYCIDNEALYDICFRTLKLTTPTYGDLNHLVSATMSGVTACLRFPGQLNADLRKLAVNMVPFPRLHFFMPGFAPLTSRGSQQYRALTVPELTQQMFDAKNMMAACDPRHGRYLTVAAVFRGRMSMKEVDEQMLNVQNKNSSYFVEWIPNNVKTAVCDIPPRGLKMSATFIGNSTAIQELFKRISEQFTAMFRRKAFLHWYTGEGMDEMEFTEAESNMNDLVSEYQQYQDATAEEEGEFEEEAEEEVA.

An MREI motif motif is present at residues 1 to 4; that stretch reads MREI. Residue Q11 coordinates GTP. T55 is modified (phosphothreonine). K58 bears the N6-acetyllysine mark. GTP contacts are provided by E69, S138, G142, T143, and G144. Residue E69 coordinates Mg(2+). S172 is subject to Phosphoserine; by CDK1. GTP-binding residues include N204 and N226. The interval 426–445 is disordered; the sequence is QDATAEEEGEFEEEAEEEVA. Residues 429–445 show a composition bias toward acidic residues; it reads TAEEEGEFEEEAEEEVA. At E438 the chain carries 5-glutamyl polyglutamate.

Belongs to the tubulin family. In terms of assembly, dimer of alpha and beta chains. A typical microtubule is a hollow water-filled tube with an outer diameter of 25 nm and an inner diameter of 15 nM. Alpha-beta heterodimers associate head-to-tail to form protofilaments running lengthwise along the microtubule wall with the beta-tubulin subunit facing the microtubule plus end conferring a structural polarity. Microtubules usually have 13 protofilaments but different protofilament numbers can be found in some organisms and specialized cells. Component of sperm flagellar doublet microtubules. Requires Mg(2+) as cofactor. In terms of processing, some glutamate residues at the C-terminus are polyglycylated, resulting in polyglycine chains on the gamma-carboxyl group. Glycylation is mainly limited to tubulin incorporated into axonemes (cilia and flagella) whereas glutamylation is prevalent in neuronal cells, centrioles, axonemes, and the mitotic spindle. Both modifications can coexist on the same protein on adjacent residues, and lowering polyglycylation levels increases polyglutamylation, and reciprocally. Cilia and flagella glycylation is required for their stability and maintenance. Flagella glycylation controls sperm motility. Some glutamate residues at the C-terminus are polyglutamylated, resulting in polyglutamate chains on the gamma-carboxyl group. Polyglutamylation plays a key role in microtubule severing by spastin (SPAST). SPAST preferentially recognizes and acts on microtubules decorated with short polyglutamate tails: severing activity by SPAST increases as the number of glutamates per tubulin rises from one to eight, but decreases beyond this glutamylation threshold. Glutamylation is also involved in cilia motility. Post-translationally, phosphorylated on Ser-172 by CDK1 during the cell cycle, from metaphase to telophase, but not in interphase. This phosphorylation inhibits tubulin incorporation into microtubules.

The protein resides in the cytoplasm. Its subcellular location is the cytoskeleton. It is found in the flagellum axoneme. In terms of biological role, tubulin is the major constituent of microtubules, a cylinder consisting of laterally associated linear protofilaments composed of alpha- and beta-tubulin heterodimers. Microtubules grow by the addition of GTP-tubulin dimers to the microtubule end, where a stabilizing cap forms. Below the cap, tubulin dimers are in GDP-bound state, owing to GTPase activity of alpha-tubulin. The sequence is that of Tubulin beta-4B chain (Tubb4b) from Rattus norvegicus (Rat).